Here is a 148-residue protein sequence, read N- to C-terminus: Lysozyme-like protein 2 (148 aa).

The signal sequence occupies residues 1 to 19 (MKAAGILTLIGCLVTGAES). One can recognise a C-type lysozyme domain in the interval 20 to 148 (KIYTRCKLAK…SDWKKDCEVS (129 aa)). Cystine bridges form between Cys-25-Cys-145, Cys-49-Cys-133, Cys-83-Cys-98, and Cys-94-Cys-112. Glu-54 is a catalytic residue. N-linked (GlcNAc...) asparagine glycosylation is present at Asn-58. Asp-71 is a catalytic residue.

It belongs to the glycosyl hydrolase 22 family. As to quaternary structure, monomer. In terms of tissue distribution, expressed in testis, epididymis and placenta.

It is found in the secreted. It catalyses the reaction Hydrolysis of (1-&gt;4)-beta-linkages between N-acetylmuramic acid and N-acetyl-D-glucosamine residues in a peptidoglycan and between N-acetyl-D-glucosamine residues in chitodextrins.. In Homo sapiens (Human), this protein is Lysozyme-like protein 2 (LYZL2).